The primary structure comprises 314 residues: MKVTILHQKFIRFVYLLDLELIKRKFVLGLSGGQDSLALLKLLCDYRKTYFGLLKLVYCDHRWRLESIANAQRLYYLSEYSNISFYYFATSTFLSSETQSRTWRYKNLLKISLSFEYSYLLTAHTLSDISETTIYRLVRNLRISEINNLLFTFLYIKKTLSISRPLASVTRNDTYWLCSLSYLPLWSDYTNYWLFLSRNRIRQELFPYLKNYFNCSLERYLDGFIYSNKINLITLNIKLKKILSKIFGYTNDGLYFNVSLFKLLPFFYQHILIRDFHFLFFHNYRSPSQFNRLLFAIALEKSQKVFIRKQYHII.

31–36 (SGGQDS) serves as a coordination point for ATP.

The protein belongs to the tRNA(Ile)-lysidine synthase family.

It localises to the plastid. Its subcellular location is the chloroplast. The catalysed reaction is cytidine(34) in tRNA(Ile2) + L-lysine + ATP = lysidine(34) in tRNA(Ile2) + AMP + diphosphate + H(+). Functionally, ligates lysine onto the cytidine present at position 34 of the AUA codon-specific tRNA(Ile) that contains the anticodon CAU, in an ATP-dependent manner. Cytidine is converted to lysidine, thus changing the amino acid specificity of the tRNA from methionine to isoleucine. The chain is tRNA(Ile)-lysidine synthase, chloroplastic from Cyanidium caldarium (Red alga).